The chain runs to 110 residues: Thiosulfate sulfurtransferase GlpE (110 aa).

The 89-residue stretch at 17–105 (KKEGAVVVDI…WRATYPAETA (89 aa)) folds into the Rhodanese domain. Cys65 (cysteine persulfide intermediate) is an active-site residue.

Belongs to the GlpE family.

The protein localises to the cytoplasm. The catalysed reaction is thiosulfate + hydrogen cyanide = thiocyanate + sulfite + 2 H(+). The enzyme catalyses thiosulfate + [thioredoxin]-dithiol = [thioredoxin]-disulfide + hydrogen sulfide + sulfite + 2 H(+). In terms of biological role, transferase that catalyzes the transfer of sulfur from thiosulfate to thiophilic acceptors such as cyanide or dithiols. May function in a CysM-independent thiosulfate assimilation pathway by catalyzing the conversion of thiosulfate to sulfite, which can then be used for L-cysteine biosynthesis. This is Thiosulfate sulfurtransferase GlpE from Pseudomonas putida (strain ATCC 700007 / DSM 6899 / JCM 31910 / BCRC 17059 / LMG 24140 / F1).